Reading from the N-terminus, the 89-residue chain is Small ribosomal subunit protein uS15 (89 aa).

Over residues 1–21 (MAITQERKNQLINEFKTHESD) the composition is skewed to basic and acidic residues. The interval 1-24 (MAITQERKNQLINEFKTHESDTGS) is disordered.

This sequence belongs to the universal ribosomal protein uS15 family. As to quaternary structure, part of the 30S ribosomal subunit. Forms a bridge to the 50S subunit in the 70S ribosome, contacting the 23S rRNA.

Its function is as follows. One of the primary rRNA binding proteins, it binds directly to 16S rRNA where it helps nucleate assembly of the platform of the 30S subunit by binding and bridging several RNA helices of the 16S rRNA. Functionally, forms an intersubunit bridge (bridge B4) with the 23S rRNA of the 50S subunit in the ribosome. This chain is Small ribosomal subunit protein uS15, found in Bacillus subtilis (strain 168).